The sequence spans 470 residues: 3-isopropylmalate dehydratase large subunit (470 aa).

[4Fe-4S] cluster is bound by residues Cys-351, Cys-411, and Cys-414.

This sequence belongs to the aconitase/IPM isomerase family. LeuC type 1 subfamily. As to quaternary structure, heterodimer of LeuC and LeuD. Requires [4Fe-4S] cluster as cofactor.

It carries out the reaction (2R,3S)-3-isopropylmalate = (2S)-2-isopropylmalate. It participates in amino-acid biosynthesis; L-leucine biosynthesis; L-leucine from 3-methyl-2-oxobutanoate: step 2/4. In terms of biological role, catalyzes the isomerization between 2-isopropylmalate and 3-isopropylmalate, via the formation of 2-isopropylmaleate. The sequence is that of 3-isopropylmalate dehydratase large subunit from Rhodopseudomonas palustris (strain HaA2).